Consider the following 491-residue polypeptide: E3 ubiquitin-protein ligase Hakai (491 aa).

Disordered regions lie at residues 1-20 (MDHTDNELQGTNSSGSLGGL) and 33-61 (KQASKVKPAPRTQRTVSRMPAKAPQGDEE). The segment at 109–149 (CDKCGLPIKVYGRMIPCKHVFCYDCAILHEKKGDKMCPGCS) adopts an RING-type zinc-finger fold. Residues 148-206 (CSDPVQRIEQCTRGSLFMCSIVQGCKRTYLSQRDLQAHINHRHMRAGKPVTRASLENVH) form an HYB domain region. The C2H2-type zinc-finger motif lies at 164–190 (FMCSIVQGCKRTYLSQRDLQAHINHRH). Residues serine 201, serine 285, and serine 290 each carry the phosphoserine modification. The disordered stretch occupies residues 255 to 491 (QPHEDIRAPP…DQTRYRPYYQ (237 aa)). 3 stretches are compositionally biased toward pro residues: residues 342-359 (APPPPPPPPISHPMPHPP), 372-389 (APPPPMTSAPPPITPPPG), and 399-423 (MNHPPPGPPPPQHGGPPVTAPPPHH). Over residues 427-442 (NSLPQFTEDQGTLSPP) the composition is skewed to polar residues. Positions 457–478 (PRGPPPPPRMQGPPSQTPLPGP) are enriched in pro residues.

This sequence belongs to the Hakai family. In terms of assembly, homodimer. Interacts with tyrosine-phosphorylated SRC substrates. Component of the WMM complex, a N6-methyltransferase complex composed of a catalytic subcomplex, named MAC, and of an associated subcomplex, named MACOM. The MAC subcomplex is composed of METTL3 and METTL14. The MACOM subcomplex is composed of WTAP, ZC3H13, CBLL1/HAKAI, VIRMA, and, in some cases of RBM15 (RBM15 or RBM15B). Also a component of a MACOM-like complex, named WTAP complex, composed of WTAP, ZC3H13, CBLL1, VIRMA, RBM15, BCLAF1 and THRAP3. In terms of processing, phosphorylated on tyrosine residues. As to expression, detected in heart, brain, spleen, lung, liver, skeletal muscle, kidney and testis.

It localises to the nucleus speckle. The protein resides in the nucleus. The protein localises to the nucleoplasm. It is found in the cytoplasm. It catalyses the reaction S-ubiquitinyl-[E2 ubiquitin-conjugating enzyme]-L-cysteine + [acceptor protein]-L-lysine = [E2 ubiquitin-conjugating enzyme]-L-cysteine + N(6)-ubiquitinyl-[acceptor protein]-L-lysine.. It functions in the pathway protein modification; protein ubiquitination. E3 ubiquitin-protein ligase that mediates ubiquitination of several tyrosine-phosphorylated Src substrates, including CDH1, CTTN and DOK1. Targets CDH1 for endocytosis and degradation. Associated component of the WMM complex, a complex that mediates N6-methyladenosine (m6A) methylation of RNAs, a modification that plays a role in the efficiency of mRNA splicing and RNA processing. Its function in the WMM complex is unknown. The sequence is that of E3 ubiquitin-protein ligase Hakai from Mus musculus (Mouse).